A 492-amino-acid chain; its full sequence is NADPH:adrenodoxin oxidoreductase, mitochondrial (492 aa).

A mitochondrion-targeting transit peptide spans 1–32 (MAPRCWRWWPWSSWTRTRLPPSRSIQNFGQHF). Positions 49, 70, 78, and 114 each coordinate FAD. Residues 185-188 (QGNV), 229-230 (RR), and Glu241 contribute to the NADP(+) site. A phosphoserine mark is found at Ser311 and Ser318. Residues Trp399 and 406–408 (GVI) contribute to the FAD site. NADP(+) is bound at residue Gly406.

The protein belongs to the ferredoxin--NADP reductase type 1 family. Monomer. Interacts directly with FDX1. It depends on FAD as a cofactor. In terms of tissue distribution, detected in adrenal cortex and corpus luteum (at protein level).

The protein localises to the mitochondrion inner membrane. The catalysed reaction is 2 reduced [adrenodoxin] + NADP(+) + H(+) = 2 oxidized [adrenodoxin] + NADPH. It carries out the reaction 2 reduced [2Fe-2S]-[ferredoxin] + NADP(+) + H(+) = 2 oxidized [2Fe-2S]-[ferredoxin] + NADPH. Its pathway is steroid metabolism; cholesterol metabolism. Its function is as follows. Serves as the first electron transfer protein in all the mitochondrial P450 systems including cholesterol side chain cleavage in all steroidogenic tissues, steroid 11-beta hydroxylation in the adrenal cortex, 25-OH-vitamin D3-24 hydroxylation in the kidney, and sterol C-27 hydroxylation in the liver. Also acts as a ferredoxin--NADP(+) reductase essential for coenzyme Q biosynthesis: together with FDX2, transfers the electrons required for the hydroxylation reaction performed by COQ6. The chain is NADPH:adrenodoxin oxidoreductase, mitochondrial (FDXR) from Bos taurus (Bovine).